The following is a 102-amino-acid chain: DET1- and DDB1-associated protein 1 (102 aa).

N-acetylalanine is present on Ala-2. Ser-33 and Ser-95 each carry phosphoserine. The interval 67–102 is disordered; the sequence is NAAKKRDQEQVEAEGESSAPPRKVARTDSPDMPEDT.

The protein belongs to the DDA1 family. In terms of assembly, component of numerous DCX (DDB1-CUL4-X-box) E3 ubiquitin-protein ligase complexes which consist of a core of DDB1, cullin-4 (CUL4A or CUL4B), DDA1 and RBX1. Component of the DCX(DCAF15) complex, also named CLR4(DCAF15) complex, composed of DCAF15, DDB1, cullin-4 (CUL4A or CUL4B), DDA1 and RBX1. Part of the DDD core complex containing DET1, DDA1 and DDB1; the DDD core complex recruits a specific UBE2E enzyme, such as UBE2E1, UBE2E2 UBE2E3, to form specific DDD-E2 complexes.

It participates in protein modification; protein ubiquitination. Functionally, functions as a component of numerous distinct DCX (DDB1-CUL4-X-box) E3 ubiquitin-protein ligase complexes which mediate the ubiquitination and subsequent proteasomal degradation of target proteins. In the DCX complexes, acts as a scaffolding subunit required to stabilize the complex. The chain is DET1- and DDB1-associated protein 1 from Mus musculus (Mouse).